The following is a 976-amino-acid chain: Dolichyl-phosphooligosaccharide-protein glycotransferase 1 (976 aa).

The Cytoplasmic portion of the chain corresponds to 1–21; sequence MVKSKVKKVEKGKEGEEKRST. Residues 22–42 form a helical membrane-spanning segment; sequence YVLLKKVLIPILVFGFAIYAF. The Extracellular segment spans residues 43–112; that stretch reads YLRHLTAGKY…KVVSLFGYNE (70 aa). The DXD motif 1 signature appears at 55 to 57; that stretch reads DPD. Residue Asp57 coordinates Mn(2+). The chain crosses the membrane as a helical span at residues 113-133; that stretch reads LQAFLLWPPFVGFLGVIAVYL. Over 134–135 the chain is Cytoplasmic; that stretch reads LG. A helical transmembrane segment spans residues 136 to 156; sequence RKVLNEWTGLWGAVVLTVSTA. Residues 157–165 lie on the Extracellular side of the membrane; sequence NFSRTFSGN. The chain crosses the membrane as a helical span at residues 166–186; that stretch reads ARGDGPFMALFIFASVAMLYY. Residues Arg167 and Asp169 each contribute to the Mn(2+) site. A DXD motif 2 motif is present at residues 167–169; sequence RGD. Residues 187–193 are Cytoplasmic-facing; the sequence is LKESNKT. Residues 194–214 traverse the membrane as a helical segment; the sequence is RKIIYGTLFVLLTVISLGAWN. Position 215 (Gly215) is a topological domain, extracellular. A helical membrane pass occupies residues 216–236; the sequence is SPFGLMVLLGFASLQTIILFI. Over 237 to 247 the chain is Cytoplasmic; sequence FGKLEELKKFV. The helical transmembrane segment at 248-268 threads the bilayer; it reads KEFYPAYLAILAFGYALTFPG. A topological domain (extracellular) is located at residue Ile269. A helical membrane pass occupies residues 270-290; it reads VKIGGFIRFAFEVFLGLIFLL. The Cytoplasmic segment spans residues 291-306; it reads VIMLYGGRYLNYSDKK. The helical transmembrane segment at 307–327 threads the bilayer; the sequence is HRFLVVTIIVLLGFGGAYAYV. At 328–360 the chain is on the extracellular side; that stretch reads GPKLFRLMGGAYQSTQVYETVQELAKTTIGDVK. Positions 347–350 match the TIXE motif motif; the sequence is TVQE. Residues 361 to 381 form a helical membrane-spanning segment; that stretch reads AYYGVESGNGLIFFLSIPGLL. The Cytoplasmic segment spans residues 382 to 396; that stretch reads ILLTKYLYDLFKKAK. The helical transmembrane segment at 397 to 417 threads the bilayer; it reads SDNETLFALVFYTMSLYLLYL. Position 418 (Ala418) is a topological domain, extracellular. Residues 419 to 439 form a helical membrane-spanning segment; the sequence is VRFLFLASYAVALFFGIFIGF. Arg420 contributes to the a glycophospholipid binding site. Residues 440-453 are Cytoplasmic-facing; it reads SMDVIEKMKENIGI. A helical transmembrane segment spans residues 454 to 474; the sequence is KAALGIVLSLMILVIPFVHAP. Residues 475–976 are Extracellular-facing; it reads VLARSARALK…SASAPHHSSE (502 aa). The segment at 513–515 is interacts with target acceptor peptide in protein substrate; sequence WWD. Residues 513–517 carry the WWDYG motif motif; the sequence is WWDYG. Position 518 (Tyr518) interacts with a glycophospholipid. The DK motif motif lies at 573–580; it reads DWAKFNAI.

Belongs to the STT3 family. The cofactor is Mn(2+). Requires Mg(2+) as cofactor.

The protein localises to the cell membrane. It carries out the reaction an archaeal dolichyl phosphooligosaccharide + [protein]-L-asparagine = an archaeal dolichyl phosphate + a glycoprotein with the oligosaccharide chain attached by N-beta-D-glycosyl linkage to a protein L-asparagine.. The protein operates within protein modification; protein glycosylation. In terms of biological role, oligosaccharyl transferase (OST) that catalyzes the initial transfer of a defined glycan (ManNAcXyl(2)GlcAMan(2)GalNAc in Pyrococcus) from the lipid carrier dolichol-monophosphate to an asparagine residue within an Asn-X-Ser/Thr consensus motif in nascent polypeptide chains, the first step in protein N-glycosylation. The chain is Dolichyl-phosphooligosaccharide-protein glycotransferase 1 (aglB1) from Pyrococcus horikoshii (strain ATCC 700860 / DSM 12428 / JCM 9974 / NBRC 100139 / OT-3).